The sequence spans 70 residues: Large ribosomal subunit protein bL31 (70 aa).

The Zn(2+) site is built by Cys16, Cys18, Cys37, and Cys40.

It belongs to the bacterial ribosomal protein bL31 family. Type A subfamily. Part of the 50S ribosomal subunit. Zn(2+) serves as cofactor.

In terms of biological role, binds the 23S rRNA. The chain is Large ribosomal subunit protein bL31 from Actinobacillus pleuropneumoniae serotype 5b (strain L20).